The chain runs to 710 residues: Pentatricopeptide repeat-containing protein At5g39680 (710 aa).

Ser-2 carries the N-acetylserine modification. PPR repeat units lie at residues Asn-35–Ser-64, Asp-68–Arg-98, Asn-99–Arg-133, Asn-135–Ser-169, His-170–Cys-200, Asp-201–Trp-235, Asn-236–Ala-270, Glu-271–Gln-301, Asn-302–Pro-336, Asn-337–Asn-371, His-372–Arg-402, Asp-403–Pro-437, Asn-438–Pro-473, and Asp-474–Glu-504. The tract at residues Ala-509–Arg-584 is type E motif. The type E(+) motif stretch occupies residues Asn-585–Lys-615. The tract at residues Pro-616–Trp-710 is type DYW motif.

The protein belongs to the PPR family. PCMP-H subfamily.

The chain is Pentatricopeptide repeat-containing protein At5g39680 (EMB2744) from Arabidopsis thaliana (Mouse-ear cress).